A 553-amino-acid polypeptide reads, in one-letter code: Putative transport protein YidE (553 aa).

The next 5 membrane-spanning stretches (helical) occupy residues 4–24 (IALT…IGNV), 28–48 (GIGL…HFVS), 65–85 (FGLI…FFAS), 95–115 (LFAV…HKLF), and 158–178 (MSYA…MWML). RCK C-terminal domains follow at residues 191 to 276 (QQHE…VIGQ) and 279 to 361 (DTSL…VLGN). Helical transmembrane passes span 371–391 (MLPV…PVFV), 393–413 (GFPA…ALIL), 439–459 (IVLF…NTLV), 464–484 (LSWI…VGIL), 493–513 (YLTM…LAFA), and 533–553 (LVMF…WSIG).

It belongs to the AAE transporter (TC 2.A.81) family. YidE subfamily.

It localises to the cell membrane. The sequence is that of Putative transport protein YidE from Escherichia coli (strain ATCC 8739 / DSM 1576 / NBRC 3972 / NCIMB 8545 / WDCM 00012 / Crooks).